Reading from the N-terminus, the 192-residue chain is Peptidyl-prolyl cis-trans isomerase 1 (192 aa).

Positions 25-188 (FFDVSIGEEP…KTVTIADCGE (164 aa)) constitute a PPIase cyclophilin-type domain.

It belongs to the cyclophilin-type PPIase family.

It catalyses the reaction [protein]-peptidylproline (omega=180) = [protein]-peptidylproline (omega=0). Functionally, PPIases accelerate the folding of proteins. It catalyzes the cis-trans isomerization of proline imidic peptide bonds in oligopeptides. The protein is Peptidyl-prolyl cis-trans isomerase 1 (cyn-1) of Caenorhabditis elegans.